The chain runs to 207 residues: Cytochrome c biogenesis ATP-binding export protein CcmA (207 aa).

An ABC transporter domain is found at 4–207 (LEARELLCER…RISLTQTRAA (204 aa)). 36–43 (GSNGAGKT) is a binding site for ATP.

It belongs to the ABC transporter superfamily. CcmA exporter (TC 3.A.1.107) family. In terms of assembly, the complex is composed of two ATP-binding proteins (CcmA) and two transmembrane proteins (CcmB).

The protein localises to the cell inner membrane. The enzyme catalyses heme b(in) + ATP + H2O = heme b(out) + ADP + phosphate + H(+). Part of the ABC transporter complex CcmAB involved in the biogenesis of c-type cytochromes; once thought to export heme, this seems not to be the case, but its exact role is uncertain. Responsible for energy coupling to the transport system. This is Cytochrome c biogenesis ATP-binding export protein CcmA from Shigella sonnei (strain Ss046).